Reading from the N-terminus, the 482-residue chain is Membrane-bound lytic murein transglycosylase F (482 aa).

Residues 1–18 (MKGLFLRIITALALLFWA) form the signal peptide. The segment at 19–267 (IDMVFPWQFL…NLKEKYLGHI (249 aa)) is non-LT domain. The interval 268-482 (SQFDYVDTRS…NLEEIKENKD (215 aa)) is LT domain. The active site involves Glu312. Positions 457–470 (ENQTTNDNANNESA) are enriched in polar residues. The interval 457–482 (ENQTTNDNANNESAVKNLEEIKENKD) is disordered. A compositionally biased stretch (basic and acidic residues) spans 473–482 (NLEEIKENKD).

The protein in the N-terminal section; belongs to the bacterial solute-binding protein 3 family. It in the C-terminal section; belongs to the transglycosylase Slt family.

It localises to the cell outer membrane. It catalyses the reaction Exolytic cleavage of the (1-&gt;4)-beta-glycosidic linkage between N-acetylmuramic acid (MurNAc) and N-acetylglucosamine (GlcNAc) residues in peptidoglycan, from either the reducing or the non-reducing ends of the peptidoglycan chains, with concomitant formation of a 1,6-anhydrobond in the MurNAc residue.. Its function is as follows. Murein-degrading enzyme that degrades murein glycan strands and insoluble, high-molecular weight murein sacculi, with the concomitant formation of a 1,6-anhydromuramoyl product. Lytic transglycosylases (LTs) play an integral role in the metabolism of the peptidoglycan (PG) sacculus. Their lytic action creates space within the PG sacculus to allow for its expansion as well as for the insertion of various structures such as secretion systems and flagella. This is Membrane-bound lytic murein transglycosylase F from Haemophilus influenzae (strain 86-028NP).